Here is a 582-residue protein sequence, read N- to C-terminus: Vacuolar basic amino acid transporter 5 (582 aa).

At 1–44 (MEETKYSSQQEIEGACGSDASLNARGSNDSPMGLSLYLCLASLT) the chain is on the cytoplasmic side. Residues 45–65 (LVLFITALDILIVGTIIDVVA) form a helical membrane-spanning segment. Residues 66 to 80 (EQFGNYSKTGWLVTG) lie on the Vacuolar side of the membrane. A glycan (N-linked (GlcNAc...) asparagine) is linked at N70. Residues 81 to 101 (YSLPNAILSLIWGRFASIIGF) traverse the membrane as a helical segment. Topologically, residues 102–104 (QHS) are cytoplasmic. Residues 105–125 (LILAILIFEAGSLIAALASSM) traverse the membrane as a helical segment. The Vacuolar segment spans residues 126–132 (NMLIFGR). The chain crosses the membrane as a helical span at residues 133 to 153 (VVAGVGGSGLQTLCFVIGCTM). At 154–160 (VGERSRP) the chain is on the cytoplasmic side. A helical transmembrane segment spans residues 161 to 181 (LVISILSCAFAVAAIVGPIIG). Residues 182–191 (GAFTTHVTWR) are Vacuolar-facing. A helical transmembrane segment spans residues 192-212 (WCFYINLPIGGLAIIMFLLTY). Topologically, residues 213-256 (KAENKGILQQIKDAIGTISSFTFSKFRHQVNFKRLMNGIIFKFD) are cytoplasmic. The chain crosses the membrane as a helical span at residues 257-277 (FFGFALCSAGLVLFLLGLTFG). The Vacuolar portion of the chain corresponds to 278-287 (GNKYSWNSGQ). A helical membrane pass occupies residues 288–308 (VITYLVLGVLLFIFSLVYDFF). Residues 309–329 (LFDKFNPEPDNISYRPLLLRR) are Cytoplasmic-facing. A helical transmembrane segment spans residues 330–350 (LVAKPAIIIVNMVTFLLCTGY). Residues 351 to 372 (NGQMIYSVQFFQLIFASSAWKA) lie on the Vacuolar side of the membrane. A helical transmembrane segment spans residues 373-393 (GLHLIPIVITNVIAAIASGVI). The Cytoplasmic segment spans residues 394–401 (TKKLGLVK). The chain crosses the membrane as a helical span at residues 402–422 (PLLIFGGVLGVIGAGLMTLMT). N423 carries an N-linked (GlcNAc...) asparagine glycan. At 423 to 430 (NTSTKSTQ) the chain is on the vacuolar side. A helical membrane pass occupies residues 431 to 451 (IGVLLLPGFSLGFALQASLMS). Over 452–469 (AQLQITKDRPEAAMDFIE) the chain is Cytoplasmic. Residues 470–492 (VTAFNTFMKSLGTTLGGVLSTTV) form a helical membrane-spanning segment. The Vacuolar segment spans residues 493–539 (FSASFHNKVSRAHLEPYEGKTVDDMILYRLQNYDGSHSTIGNILSDS). The helical transmembrane segment at 540–560 (IKNVFWMDLGFYALGFLFCSF) threads the bilayer. The Cytoplasmic portion of the chain corresponds to 561–582 (SSNKKLIIPKKDDTPEDNLEDK).

The protein belongs to the major facilitator superfamily.

It localises to the vacuole membrane. In terms of biological role, transporter required for vacuolar uptake of basic amino acids. The polypeptide is Vacuolar basic amino acid transporter 5 (VBA5) (Saccharomyces cerevisiae (strain ATCC 204508 / S288c) (Baker's yeast)).